Here is a 317-residue protein sequence, read N- to C-terminus: UV DNA damage endonuclease (317 aa).

The protein belongs to the uve1/UvsE family.

Its function is as follows. Component in a DNA repair pathway. Removal of UV LIGHT damaged nucleotides. Recognizes pyrimidine dimers and cleave a phosphodiester bond immediately 5' to the lesion. This is UV DNA damage endonuclease from Bacillus cereus (strain Q1).